Reading from the N-terminus, the 300-residue chain is Bifunctional protein FolD (300 aa).

NADP(+) is bound by residues 168–170 (GRS), Ser-193, and Ile-234.

The protein belongs to the tetrahydrofolate dehydrogenase/cyclohydrolase family. Homodimer.

The catalysed reaction is (6R)-5,10-methylene-5,6,7,8-tetrahydrofolate + NADP(+) = (6R)-5,10-methenyltetrahydrofolate + NADPH. It catalyses the reaction (6R)-5,10-methenyltetrahydrofolate + H2O = (6R)-10-formyltetrahydrofolate + H(+). Its pathway is one-carbon metabolism; tetrahydrofolate interconversion. Catalyzes the oxidation of 5,10-methylenetetrahydrofolate to 5,10-methenyltetrahydrofolate and then the hydrolysis of 5,10-methenyltetrahydrofolate to 10-formyltetrahydrofolate. This Ehrlichia ruminantium (strain Welgevonden) protein is Bifunctional protein FolD.